A 192-amino-acid polypeptide reads, in one-letter code: uncharacterized protein (192 aa).

A run of 6 helical transmembrane segments spans residues 5-22 (VPPLFFVCALFFAEGIGL), 42-61 (FLFLGGILITGNWVCIHYVY), 66-88 (LRFLTPLGVGASAFCLSTCSGKL), 101-118 (WGLLYALVFYITYTALNL), 122-139 (LVMWGVSCVGFLCFSTIL), and 159-181 (ALLLASMGFIALSLYGTDELWLF).

It localises to the cell membrane. This is an uncharacterized protein from Treponema pallidum (strain Nichols).